A 398-amino-acid chain; its full sequence is Acetate kinase (398 aa).

Residue asparagine 10 participates in Mg(2+) binding. Residue lysine 17 coordinates ATP. Arginine 91 contacts substrate. The Proton donor/acceptor role is filled by aspartate 148. ATP is bound by residues 208-212 (HLGNG), 283-285 (DCR), and 331-335 (GIGEN). Position 385 (glutamate 385) interacts with Mg(2+).

This sequence belongs to the acetokinase family. In terms of assembly, homodimer. Mg(2+) is required as a cofactor. Requires Mn(2+) as cofactor.

Its subcellular location is the cytoplasm. The enzyme catalyses acetate + ATP = acetyl phosphate + ADP. Its pathway is metabolic intermediate biosynthesis; acetyl-CoA biosynthesis; acetyl-CoA from acetate: step 1/2. Its function is as follows. Catalyzes the formation of acetyl phosphate from acetate and ATP. Can also catalyze the reverse reaction. The protein is Acetate kinase of Shewanella woodyi (strain ATCC 51908 / MS32).